Consider the following 754-residue polypeptide: Endothelin-converting enzyme 1 (754 aa).

The Cytoplasmic segment spans residues 1–52; sequence MMSTYKRATLDEEDLVDSLSESDVYPNHLQVNFRGPRNGQRCWAARTPVEKR. Residue T9 is modified to Phosphothreonine. Residues 53–73 form a helical; Signal-anchor for type II membrane protein membrane-spanning segment; the sequence is LVVLVALLAAALVACLAVLGI. Topologically, residues 74-754 are extracellular; sequence QYQTRTPSVC…MNPHHKCEVW (681 aa). The region spanning 82–754 is the Peptidase M13 domain; sequence VCLSEACISV…MNPHHKCEVW (673 aa). 5 disulfide bridges follow: C83-C88, C106-C739, C114-C699, C169-C419, and C628-C751. 8 N-linked (GlcNAc...) asparagine glycosylation sites follow: N150, N171, N194, N254, N300, N346, N367, and N523. A Zn(2+)-binding site is contributed by H591. The active site involves E592. Residue H595 coordinates Zn(2+). N-linked (GlcNAc...) asparagine glycosylation is found at N616 and N635. Zn(2+) is bound at residue E651. D655 serves as the catalytic Proton donor.

Belongs to the peptidase M13 family. As to quaternary structure, homodimer; disulfide-linked. Interacts with PPP1R16B. Interacts with TSPAN8; this interaction recruits the endothelin converting enzyme ECE1 to tetraspanin-enriched microdomains and positively modulates its enzymatic activity. It depends on Zn(2+) as a cofactor.

The protein resides in the cell membrane. It carries out the reaction Hydrolysis of the 21-Trp-|-Val-22 bond in big endothelin to form endothelin 1.. With respect to regulation, inhibited by phosphoramidon. Converts big endothelin-1 to endothelin-1. This chain is Endothelin-converting enzyme 1 (ECE1), found in Bos taurus (Bovine).